We begin with the raw amino-acid sequence, 578 residues long: NADH-quinone oxidoreductase subunit C/D (578 aa).

Residues 1 to 167 (MILSLFKLFG…DEFYFTKQKE (167 aa)) are NADH dehydrogenase I subunit C. Residues 192–578 (EYMFLNFGPN…IDFVMSDVDR (387 aa)) are NADH dehydrogenase I subunit D.

This sequence in the N-terminal section; belongs to the complex I 30 kDa subunit family. The protein in the C-terminal section; belongs to the complex I 49 kDa subunit family. NDH-1 is composed of 13 different subunits. Subunits NuoB, CD, E, F, and G constitute the peripheral sector of the complex.

It is found in the cell inner membrane. It catalyses the reaction a quinone + NADH + 5 H(+)(in) = a quinol + NAD(+) + 4 H(+)(out). Functionally, NDH-1 shuttles electrons from NADH, via FMN and iron-sulfur (Fe-S) centers, to quinones in the respiratory chain. The immediate electron acceptor for the enzyme in this species is believed to be ubiquinone. Couples the redox reaction to proton translocation (for every two electrons transferred, four hydrogen ions are translocated across the cytoplasmic membrane), and thus conserves the redox energy in a proton gradient. In Buchnera aphidicola subsp. Cinara cedri (strain Cc), this protein is NADH-quinone oxidoreductase subunit C/D.